A 252-amino-acid chain; its full sequence is 3-deoxy-manno-octulosonate cytidylyltransferase (252 aa).

Belongs to the KdsB family.

It is found in the cytoplasm. It catalyses the reaction 3-deoxy-alpha-D-manno-oct-2-ulosonate + CTP = CMP-3-deoxy-beta-D-manno-octulosonate + diphosphate. Its pathway is nucleotide-sugar biosynthesis; CMP-3-deoxy-D-manno-octulosonate biosynthesis; CMP-3-deoxy-D-manno-octulosonate from 3-deoxy-D-manno-octulosonate and CTP: step 1/1. The protein operates within bacterial outer membrane biogenesis; lipopolysaccharide biosynthesis. Activates KDO (a required 8-carbon sugar) for incorporation into bacterial lipopolysaccharide in Gram-negative bacteria. This Solibacter usitatus (strain Ellin6076) protein is 3-deoxy-manno-octulosonate cytidylyltransferase.